A 206-amino-acid polypeptide reads, in one-letter code: Glycerol-3-phosphate acyltransferase (206 aa).

Helical transmembrane passes span 3–23, 51–71, 83–103, 113–133, and 162–182; these read LGWLLVIGSYLLGSVSFSYII, VGPAVTVLLLDILKGVIAVVV, FAAAAGIAAIIGHNWPIYYGF, IGVLASLVPLAAVLAGVIAIG, and WFGYPVAYIYLTIIVAILSMW.

Belongs to the PlsY family. Probably interacts with PlsX.

It localises to the cell membrane. The catalysed reaction is an acyl phosphate + sn-glycerol 3-phosphate = a 1-acyl-sn-glycero-3-phosphate + phosphate. It participates in lipid metabolism; phospholipid metabolism. Functionally, catalyzes the transfer of an acyl group from acyl-phosphate (acyl-PO(4)) to glycerol-3-phosphate (G3P) to form lysophosphatidic acid (LPA). This enzyme utilizes acyl-phosphate as fatty acyl donor, but not acyl-CoA or acyl-ACP. The polypeptide is Glycerol-3-phosphate acyltransferase (Halalkalibacterium halodurans (strain ATCC BAA-125 / DSM 18197 / FERM 7344 / JCM 9153 / C-125) (Bacillus halodurans)).